The following is a 632-amino-acid chain: Golgin subfamily A member 8M (632 aa).

The interval 1–77 is disordered; sequence MAEETQHNKL…SSATLKDLES (77 aa). The span at 38–50 shows a compositional bias: polar residues; that stretch reads TNGSIPQTATSGG. Coiled coils occupy residues 86–154 and 209–421; these read LDSR…HMKR and KLEQ…SLMA. Basic and acidic residues predominate over residues 352–362; the sequence is KQEERIQEQHK. Disordered regions lie at residues 352–384, 422–456, and 505–524; these read KQEE…NKST, LPGE…REAM, and DAAL…DEGE. Residues 508–520 show a composition bias toward gly residues; sequence LGGGHHQAGAQGG.

The protein belongs to the GOLGA8 family.

The chain is Golgin subfamily A member 8M from Homo sapiens (Human).